The primary structure comprises 350 residues: Methylthioribose-1-phosphate isomerase (350 aa).

Substrate-binding positions include 48–50 (RGA), R93, and Q198. Residue D239 is the Proton donor of the active site. 249-250 (NK) contributes to the substrate binding site.

The protein belongs to the eIF-2B alpha/beta/delta subunits family. MtnA subfamily.

It catalyses the reaction 5-(methylsulfanyl)-alpha-D-ribose 1-phosphate = 5-(methylsulfanyl)-D-ribulose 1-phosphate. It functions in the pathway amino-acid biosynthesis; L-methionine biosynthesis via salvage pathway; L-methionine from S-methyl-5-thio-alpha-D-ribose 1-phosphate: step 1/6. Its function is as follows. Catalyzes the interconversion of methylthioribose-1-phosphate (MTR-1-P) into methylthioribulose-1-phosphate (MTRu-1-P). The protein is Methylthioribose-1-phosphate isomerase of Fervidobacterium nodosum (strain ATCC 35602 / DSM 5306 / Rt17-B1).